The sequence spans 1377 residues: DNA-directed RNA polymerase subunit beta'' (1377 aa).

Zn(2+)-binding residues include cysteine 224, cysteine 294, cysteine 301, and cysteine 304.

This sequence belongs to the RNA polymerase beta' chain family. RpoC2 subfamily. In terms of assembly, in plastids the minimal PEP RNA polymerase catalytic core is composed of four subunits: alpha, beta, beta', and beta''. When a (nuclear-encoded) sigma factor is associated with the core the holoenzyme is formed, which can initiate transcription. Requires Zn(2+) as cofactor.

It localises to the plastid. The protein resides in the chloroplast. It carries out the reaction RNA(n) + a ribonucleoside 5'-triphosphate = RNA(n+1) + diphosphate. In terms of biological role, DNA-dependent RNA polymerase catalyzes the transcription of DNA into RNA using the four ribonucleoside triphosphates as substrates. The sequence is that of DNA-directed RNA polymerase subunit beta'' from Calycanthus floridus var. glaucus (Eastern sweetshrub).